A 220-amino-acid chain; its full sequence is Putative O-methyltransferase Mmcs_3995 (220 aa).

Residues valine 47, glutamate 69, 71 to 72, serine 77, aspartate 95, and valine 96 contribute to the S-adenosyl-L-methionine site; that span reads GT. Aspartate 143 provides a ligand contact to substrate. Aspartate 145 is an S-adenosyl-L-methionine binding site.

Belongs to the class I-like SAM-binding methyltransferase superfamily. Cation-dependent O-methyltransferase family.

The chain is Putative O-methyltransferase Mmcs_3995 from Mycobacterium sp. (strain MCS).